The sequence spans 674 residues: Polyunsaturated fatty acid 5-lipoxygenase (674 aa).

A PLAT domain is found at 2 to 118 (PSYTVTVATG…EIVLRDGRAK (117 aa)). Positions 17, 18, 19, 44, 45, 47, 79, and 80 each coordinate Ca(2+). The Lipoxygenase domain occupies 119–674 (LARDDQIHIL…PDRIPNSVAI (556 aa)). Position 272 is a phosphoserine (Ser-272). Fe cation contacts are provided by His-368 and His-373. A Phosphoserine modification is found at Ser-524. Fe cation-binding residues include His-551, Asn-555, and Ile-674.

Belongs to the lipoxygenase family. In terms of assembly, homodimer. Interacts with ALOX5AP and LTC4S. Interacts with COTL1, the interaction is required for stability and efficient catalytic activity. Interacts with PIK3R1; this interaction bridges ALOX5 with CD40 after CD40 ligation in B cells and leads to the production of reactive oxygen species (ROS). Interacts (via PLAT domain) with DICER1 (via Dicer dsRNA-binding fold domain); this interaction enhances arachidonate 5-lipoxygenase activity and modifies the miRNA precursor processing activity of DICER1. Fe cation serves as cofactor. In terms of processing, serine phosphorylation by MAPKAPK2 is stimulated by arachidonic acid. Phosphorylation on Ser-524 by PKA has an inhibitory effect. Phosphorylation on Ser-272 prevents export from the nucleus. Phosphorylation at Ser-524 is stimulated by 8-bromo-3',5'-cyclic AMP or prostaglandin E2. Expressed in skin Langerhans cells and their emigrated counterparts in draining lymph nodes. Highly expressed in circulating leukocytes.

The protein resides in the cytoplasm. It is found in the nucleus matrix. It localises to the nucleus membrane. Its subcellular location is the perinuclear region. The protein localises to the cytosol. The protein resides in the nucleus envelope. It is found in the nucleus intermembrane space. It carries out the reaction (5Z,8Z,11Z,14Z)-eicosatetraenoate + O2 = (5S)-hydroperoxy-(6E,8Z,11Z,14Z)-eicosatetraenoate. The catalysed reaction is (5Z,8Z,11Z,14Z)-eicosatetraenoate + O2 = leukotriene A4 + H2O. The enzyme catalyses (5Z,8Z,11Z,14Z)-eicosatetraenoate + O2 = (8S)-hydroperoxy-(5Z,9E,11Z,14Z)-eicosatetraenoate. It catalyses the reaction (5Z,8Z,11Z,14Z)-eicosatetraenoate + O2 = (12S)-hydroperoxy-(5Z,8Z,10E,14Z)-eicosatetraenoate. It carries out the reaction 18-HEPE + O2 = (5S)-hydroperoxy-18-hydroxy-(7E,9E,11Z,14Z,16E)-eicosapentaenoate. The catalysed reaction is (18R)-hydroxy-(5Z,8Z,11Z,14Z,16E)-eicosapentaenoate + O2 = (5S)-hydroperoxy-(18R)-hydroxy-(6E,8Z,11Z,14Z,16E)-eicosapentaenoate. The enzyme catalyses (18S)-hydroxy-(5Z,8Z,11Z,14Z,16E)-eicosapentaenoate + O2 = (5S)-hydroperoxy-(18S)-hydroxy-(6E,8Z,11Z,14Z,16E)-eicosapentaenoate. It catalyses the reaction (5S)-hydroperoxy-(18S)-hydroxy-(6E,8Z,11Z,14Z,16E)-eicosapentaenoate = (5S,6S)-epoxy-(18S)-hydroxy-(7E,9E,11Z,14Z,16E)-eicosapentaenoate + H2O. It carries out the reaction (5S)-hydroperoxy-(18R)-hydroxy-(6E,8Z,11Z,14Z,16E)-eicosapentaenoate = (5S,6S)-epoxy-(18R)-hydroxy-(7E,9E,11Z,14Z,16E)-eicosapentaenoate + H2O. The catalysed reaction is (5S)-hydroperoxy-18-hydroxy-(7E,9E,11Z,14Z,16E)-eicosapentaenoate = (5S,6S)-epoxy-18-hydroxy-(7E,9E,11Z,14Z,16E)-eicosapentaenoate + H2O. The enzyme catalyses (15S)-hydroxy-(5Z,8Z,11Z,13E)-eicosatetraenoate + O2 = (5S)-hydroperoxy-(15S)-hydroxy-(6E,8Z,11Z,13E)-eicosatetraenoate. It catalyses the reaction (5S)-hydroperoxy-(6E,8Z,11Z,14Z)-eicosatetraenoate = leukotriene A4 + H2O. It carries out the reaction (5Z,8Z)-eicosadienoate + O2 = (5S)-hydroperoxy-(6E,8Z)-eicosadienoate. The catalysed reaction is (12S)-hydroxy-(5Z,8Z,10E,14Z)-eicosatetraenoate + O2 = (5S)-hydroperoxy-(12S)-hydroxy-(6E,8Z,10E,14Z)-eicosatetraenoate. The enzyme catalyses (5Z,8Z,11Z,14Z,17Z)-eicosapentaenoate + O2 = 5-hydroperoxy-(6E,8Z,11Z,14Z,17Z)-eicosapentaenoate. It catalyses the reaction (4Z,7Z,10Z,13Z,16Z,19Z)-docosahexaenoate + O2 = (14S)-hydroperoxy-(4Z,7Z,10Z,12E,16Z,19Z)-docosahexaenoate. It carries out the reaction (4Z,7Z,10Z,13Z,16Z,19Z)-docosahexaenoate + O2 = (7S)-hydroperoxy-(4Z,8E,10Z,13Z,16Z,19Z)-docosahexaenoate. The catalysed reaction is (4Z,7Z,10Z,13Z,16Z,19Z)-docosahexaenoate + O2 = (17S)-hydroperoxy-(4Z,7Z,10Z,13Z,15E,19Z)-docosahexaenoate. The protein operates within lipid metabolism; leukotriene A4 biosynthesis. Its function is as follows. Catalyzes the oxygenation of arachidonate to 5-hydroperoxyeicosatetraenoate (5-HPETE) followed by the dehydration to 5,6- epoxyeicosatetraenoate (Leukotriene A4/LTA4), the first two steps in the biosynthesis of leukotrienes, which are potent mediators of inflammation. Also catalyzes the oxygenation of arachidonic acid into 8-hydroperoxyicosatetraenoic acid (8-HPETE) and 12-hydroperoxyicosatetraenoic acid (12-HPETE). Displays lipoxin synthase activity being able to convert (15S)-HETE into a conjugate tetraene. Although arachidonate is the preferred substrate, this enzyme can also metabolize oxidized fatty acids derived from arachidonate such as (15S)-HETE, eicosapentaenoate (EPA) such as (18R)- and (18S)-HEPE or docosahexaenoate (DHA) which lead to the formation of specialized pro-resolving mediators (SPM) lipoxin and resolvins E and D respectively, therefore it participates in anti-inflammatory responses. Oxidation of DHA directly inhibits endothelial cell proliferation and sprouting angiogenesis via peroxisome proliferator-activated receptor gamma (PPARgamma). It does not catalyze the oxygenation of linoleic acid and does not convert (5S)-HETE to lipoxin isomers. In addition to inflammatory processes, participates in dendritic cell migration, wound healing through an antioxidant mechanism based on heme oxygenase-1 (HO-1) regulation expression, monocyte adhesion to the endothelium via ITGAM expression on monocytes. Moreover, it helps establish an adaptive humoral immunity by regulating primary resting B cells and follicular helper T cells and participates in the CD40-induced production of reactive oxygen species (ROS) after CD40 ligation in B cells through interaction with PIK3R1 that bridges ALOX5 with CD40. May also play a role in glucose homeostasis, regulation of insulin secretion and palmitic acid-induced insulin resistance via AMPK. Can regulate bone mineralization and fat cell differentiation increases in induced pluripotent stem cells. This is Polyunsaturated fatty acid 5-lipoxygenase from Mus musculus (Mouse).